Consider the following 326-residue polypeptide: Phenylalanine--tRNA ligase alpha subunit (326 aa).

Glutamate 251 contacts Mg(2+).

This sequence belongs to the class-II aminoacyl-tRNA synthetase family. Phe-tRNA synthetase alpha subunit type 1 subfamily. In terms of assembly, tetramer of two alpha and two beta subunits. Mg(2+) is required as a cofactor.

Its subcellular location is the cytoplasm. The enzyme catalyses tRNA(Phe) + L-phenylalanine + ATP = L-phenylalanyl-tRNA(Phe) + AMP + diphosphate + H(+). This chain is Phenylalanine--tRNA ligase alpha subunit, found in Alteromonas mediterranea (strain DSM 17117 / CIP 110805 / LMG 28347 / Deep ecotype).